A 2511-amino-acid chain; its full sequence is Chromodomain-helicase-DNA-binding protein 8 (2511 aa).

A disordered region spans residues 484–615; it reads PRVLNQDELP…RSNRQVKRKK (132 aa). Over residues 515–524 the composition is skewed to gly residues; the sequence is GGGVGGGGGG. A compositionally biased stretch (basic residues) spans 604–615; that stretch reads KRRSNRQVKRKK. Chromo domains follow at residues 680–745 and 760–826; these read AIVD…AQMR and VEVD…RTPR. Residues 859-1033 enclose the Helicase ATP-binding domain; it reads LFNWYNRQNC…FSLLHFLEPA (175 aa). 872-879 serves as a coordination point for ATP; it reads DEMGLGKT. The short motif at 984-987 is the DEAH box element; sequence DEAH. A Helicase C-terminal domain is found at 1174–1330; the sequence is LLDKLLPRLK…SMSGNKESSI (157 aa). Disordered regions lie at residues 1440–1482, 1715–1736, 2086–2168, and 2468–2511; these read TRQF…HSGG, EQQA…SEDP, SKNN…LTDP, and PSAL…SSED. Over residues 1452–1461 the composition is skewed to acidic residues; sequence DLSDLDSDDD. A compositionally biased stretch (low complexity) spans 2111–2125; sequence DSGSSSSSRHSGSSD.

This sequence belongs to the SNF2/RAD54 helicase family. CHD8 subfamily. Component of some MLL1/MLL complex.

It is found in the nucleus. The enzyme catalyses ATP + H2O = ADP + phosphate + H(+). ATP-dependent chromatin-remodeling factor, it slides nucleosomes along DNA; nucleosome sliding requires ATP. Acts as a transcription repressor by remodeling chromatin structure and recruiting histone H1 to target genes. Suppresses p53/tp53-mediated apoptosis by recruiting histone H1 and preventing p53/tp53 transactivation activity. Acts as a negative regulator of Wnt signaling pathway by regulating beta-catenin (ctnnb1) activity. Negatively regulates ctnnb1-targeted gene expression by being recruited specifically to the promoter regions of several ctnnb1 responsive genes. May also act as a transcription activator by participating in efficient U6 RNA polymerase III transcription. The polypeptide is Chromodomain-helicase-DNA-binding protein 8 (Danio rerio (Zebrafish)).